Consider the following 424-residue polypeptide: ATP-dependent RNA helicase WM6 (424 aa).

Positions 1–16 (MADNDDLLDYEDEEQT) are enriched in acidic residues. The interval 1-27 (MADNDDLLDYEDEEQTETTAVENQEAP) is disordered. Positions 41–69 (SGFRDFLLKPEILRAIVDCGFEHPSEVQH) match the Q motif motif. The Helicase ATP-binding domain occupies 72–246 (IPQAVLGMDI…KKFMQDPMEV (175 aa)). 85 to 92 (AKSGMGKT) contacts ATP. A DECD box motif is present at residues 193-196 (DECD). The Helicase C-terminal domain occupies 258-419 (GLQQHYVNLK…ELPEEIDLST (162 aa)).

It belongs to the DEAD box helicase family. DECD subfamily. As to quaternary structure, component of the spliceosome. Interacts with the exon junction complex.

It is found in the nucleus speckle. The catalysed reaction is ATP + H2O = ADP + phosphate + H(+). In terms of biological role, required for mRNA export out of the nucleus. Probable RNA helicase that may regulate entry into mitosis by down-regulating the expression of other genes whose activity may be rate-limiting for entry into mitosis during embryogenesis. Binds to salivary gland chromosomes and modifies position effect variegation. Promotes an open chromatin structure that favors transcription during development by regulating the spread of heterochromatin. The protein is ATP-dependent RNA helicase WM6 (Hel25E) of Drosophila melanogaster (Fruit fly).